The primary structure comprises 328 residues: DNA-directed RNA polymerase subunit alpha (328 aa).

Residues 1 to 231 form an alpha N-terminal domain (alpha-NTD) region; sequence MIYQMQMPAK…EHVAFFADFS (231 aa). The tract at residues 252 to 328 is alpha C-terminal domain (alpha-CTD); sequence MRKLLNTKIE…MDITKYQMKG (77 aa).

Belongs to the RNA polymerase alpha chain family. In terms of assembly, homodimer. The RNAP catalytic core consists of 2 alpha, 1 beta, 1 beta' and 1 omega subunit. When a sigma factor is associated with the core the holoenzyme is formed, which can initiate transcription.

The catalysed reaction is RNA(n) + a ribonucleoside 5'-triphosphate = RNA(n+1) + diphosphate. Functionally, DNA-dependent RNA polymerase catalyzes the transcription of DNA into RNA using the four ribonucleoside triphosphates as substrates. The polypeptide is DNA-directed RNA polymerase subunit alpha (Chlorobium phaeovibrioides (strain DSM 265 / 1930) (Prosthecochloris vibrioformis (strain DSM 265))).